The chain runs to 790 residues: MANVRKRRKKKNEHKALRLTFITLLMVFLFSCVAAAGVGLAMIKAAPPLDVDKVLNPSEPSVIYDDKNKLVDTVISDTYRTIVSYEDVPDNLKNAFISIEDERFFNHRGIDYKRVFGAFFRNISNKLKGKSALQGASTITQQLVRNTLLSQEVRIKRKVQEMYLSIQLEKKVSKEQILEAYMNTIPLGGSAYGIEAASKQYFGKSVKDLNLIESAFIAGLPQSPSTFYNAAMSQKNTERYINRTKLVLGKMREHNYISKEDFDKSMAYIDKNKIPLKTSNINISRLNYEWFSREIIKQVKKDLMNEYKISPTEADKTIMYGGLKIYGTMDKSLQDFSQNTLDNLDGILGINSKDYSGIIQPEASVSIVDYKTGNVKVLIGGRGKQPPLSFNRATEFYRAPGSTIKPLTVYGPAIDTKTSTAASSYNDAPVPEEIGKLYDKEPYNPKNSPNIYEGKMTLREALMKSKNVISVRIEHELGLKTGAEYGKKFGLTIDDSMDGTSMAALSLGQLSAKTGVSGTNTLGMAAAYGVFGNKGALSKPVVYKKVVDRTGKVLLENKYASSKVMSPEAAYILYDLLKGPVSYTPGATGMKANFGPMARGKTGTSNQSSDLWFAGLSPYYSAAVWIGKDDYSPFTNEFGRYIGSSDAALIWKLIMGEAHKNLEYKTIEKPAGVTEAYVCSKSGKIPSSSCPRDSIKLEYFIEGTIPGEICDYHTGIFNNNKDKDDDDDDKDKDKEDEEENKDEKNEDKKEAKDNTKNKDKDKKKDNDRKIDMDKKPDSSKRKRKMIKPQI.

The Cytoplasmic portion of the chain corresponds to 1–20 (MANVRKRRKKKNEHKALRLT). Residues 21-41 (FITLLMVFLFSCVAAAGVGLA) form a helical; Signal-anchor for type II membrane protein membrane-spanning segment. Topologically, residues 42 to 790 (MIKAAPPLDV…RKRKMIKPQI (749 aa)) are extracellular. The tract at residues 61–230 (SVIYDDKNKL…PQSPSTFYNA (170 aa)) is transglycosylase. Glu100 serves as the catalytic Proton donor; for transglycosylase activity. A transpeptidase region spans residues 363 to 656 (ASVSIVDYKT…AALIWKLIMG (294 aa)). The active-site Acyl-ester intermediate; for transpeptidase activity is Ser402. Positions 720–790 (NKDKDDDDDD…RKRKMIKPQI (71 aa)) are disordered. The segment covering 724–740 (DDDDDDKDKDKEDEEEN) has biased composition (acidic residues). The span at 741-779 (KDEKNEDKKEAKDNTKNKDKDKKKDNDRKIDMDKKPDSS) shows a compositional bias: basic and acidic residues. Over residues 780–790 (KRKRKMIKPQI) the composition is skewed to basic residues.

The protein in the N-terminal section; belongs to the glycosyltransferase 51 family. It in the C-terminal section; belongs to the transpeptidase family.

Its subcellular location is the cell membrane. The enzyme catalyses [GlcNAc-(1-&gt;4)-Mur2Ac(oyl-L-Ala-gamma-D-Glu-L-Lys-D-Ala-D-Ala)](n)-di-trans,octa-cis-undecaprenyl diphosphate + beta-D-GlcNAc-(1-&gt;4)-Mur2Ac(oyl-L-Ala-gamma-D-Glu-L-Lys-D-Ala-D-Ala)-di-trans,octa-cis-undecaprenyl diphosphate = [GlcNAc-(1-&gt;4)-Mur2Ac(oyl-L-Ala-gamma-D-Glu-L-Lys-D-Ala-D-Ala)](n+1)-di-trans,octa-cis-undecaprenyl diphosphate + di-trans,octa-cis-undecaprenyl diphosphate + H(+). The catalysed reaction is Preferential cleavage: (Ac)2-L-Lys-D-Ala-|-D-Ala. Also transpeptidation of peptidyl-alanyl moieties that are N-acyl substituents of D-alanine.. The protein operates within cell wall biogenesis; peptidoglycan biosynthesis. Its function is as follows. Cell wall formation. Synthesis of cross-linked peptidoglycan from the lipid intermediates. The enzyme has a penicillin-insensitive transglycosylase N-terminal domain (formation of linear glycan strands) and a penicillin-sensitive transpeptidase C-terminal domain (cross-linking of the peptide subunits). This is Penicillin-binding protein 1A (pbpA) from Clostridium tetani (strain Massachusetts / E88).